The sequence spans 480 residues: Pre-glycoprotein polyprotein GP complex (480 aa).

Gly2 is lipidated: N-myristoyl glycine; by host. The Extracellular portion of the chain corresponds to 2-17 (GQLVSFFQEIPVFFQE). Residues 18 to 33 (ALNIALAVVTLLAIVK) traverse the membrane as a helical segment. Residues 34 to 58 (GVLNLWKSGLFQLLMFLILAGRSCS) lie on the Cytoplasmic side of the membrane. Cys57 is a binding site for Zn(2+). Topologically, residues 59-419 (FRIGYHTSFE…QGRTPLTLVD (361 aa)) are extracellular. Cystine bridges form between Cys85/Cys221, Cys266/Cys279, Cys288/Cys297, and Cys351/Cys372. N-linked (GlcNAc...) asparagine; by host glycosylation is found at Asn88, Asn174, and Asn214. N-linked (GlcNAc...) asparagine; by host glycans are attached at residues Asn352, Asn360, Asn377, and Asn382. A helical membrane pass occupies residues 420 to 440 (LCFWSAVFYTTTLFLHLVGFP). The Cytoplasmic segment spans residues 441-480 (THRHISGEPCPLPHRLNRHGACNCGRFKRLKKPLVWYKHH). His442, His444, Cys450, His454, Cys462, Cys464, and His480 together coordinate Zn(2+).

It belongs to the arenaviridae GPC protein family. In terms of assembly, interacts with glycoprotein G2. Part of the GP complex (GP-C) together with glycoprotein G1 and glycoprotein G2. The GP-complex interacts with protein Z, which interacts with ribonucleocapsid; these interactions may induce virion budding. Homotrimer; disulfide-linked. In pre-fusion state, G1 homotrimers bind G2 homotrimers via ionic interactions. Part of the GP complex (GP-C) together with glycoprotein G2 and the stable signal peptide. The GP-complex interacts with protein Z, which interacts with ribonucleocapsid; these interactions may induce virion budding. As to quaternary structure, homotrimer. Interacts with the stable signal peptide. In pre-fusion state, G2 homotrimers bind G1 homotrimers via ionic interactions. Part of the GP complex (GP-C) together with glycoprotein G1 and the stable signal peptide. Acidification in the endosome triggers rearrangements, which ultimately leads to a 6 helix bundle formed by the two heptad repeat domains (HR1 and HR2) in post-fusion state. The GP-complex interacts with protein Z, which interacts with ribonucleocapsid; these interactions may induce virion budding. In terms of processing, specific enzymatic cleavages in vivo yield mature proteins. GP-C polyprotein is cleaved in the endoplasmic reticulum by the host protease MBTPS1. Only cleaved glycoprotein is incorporated into virions. The SSP remains stably associated with the GP complex following cleavage by signal peptidase and plays crucial roles in the trafficking of GP through the secretory pathway. Post-translationally, myristoylation is necessary for GP2-mediated fusion activity.

The protein resides in the virion membrane. Its subcellular location is the host endoplasmic reticulum membrane. It is found in the host Golgi apparatus membrane. The protein localises to the host cell membrane. In terms of biological role, functions as a cleaved signal peptide that is retained as the third component of the GP complex (GP-C). Helps to stabilize the spike complex in its native conformation. The SSP is required for efficient glycoprotein expression, post-translational maturation cleavage of G1 and G2, glycoprotein transport to the cell surface plasma membrane, formation of infectious virus particles, and acid pH-dependent glycoprotein-mediated cell fusion. Its function is as follows. Forms the virion spikes together with glycoprotein G2. The glycoprotein spike trimers are connected to the underlying matrix. Interacts with the host receptor leading to virus endocytosis. Forms the virion spikes together with glycoprotein G1. The glycoprotein spike trimers are connected to the underlying matrix. Class I viral fusion protein that directs fusion of viral and host endosomal membranes, leading to delivery of the nucleocapsid into the cytoplasm. Membrane fusion is mediated by irreversible conformational changes induced by acidification. This Cupixi mammarenavirus (isolate Rat/Brasil/BeAn 119303/1970) (CPXV) protein is Pre-glycoprotein polyprotein GP complex.